The following is a 446-amino-acid chain: Tripartite motif-containing protein 43B (446 aa).

Residues 15–56 (CVICLNYLVDPVTICCGHSFCRPCLCLSWEEAQSPANCPACR) form an RING-type zinc finger. Residues 88–129 (SEKQICGTHRQTKKMFCDMDKSLLCLLCSNSQEHGAHKHYPI) form a B box-type zinc finger. Positions 93, 96, 115, and 121 each coordinate Zn(2+). Coiled coils occupy residues 129-158 (IEEAAEEDREKLLKQMRILWKKIQENQRNL) and 190-220 (LHKEEKQHLERLNKEYQEIFQQLQRSWVKMD). A B30.2/SPRY domain is found at 269-446 (ELTAGPITGL…VRPFFYTGHR (178 aa)).

It belongs to the TRIM/RBCC family.

The chain is Tripartite motif-containing protein 43B (TRIM43B) from Homo sapiens (Human).